The primary structure comprises 191 residues: MTDPILSLKERLSGRSIYLIGMMGSGKTSTGRPLAKRLGYGFVDADAVIEQVAGCTIPEIFERDGEAGFRSIESQVLNAISQRHSLVVATGGGVVTKPENWGQLHSGIVVWLDVNRAQLIERLRDDSTQRPLLQQPNPEAALDTLLQERRPLYGEADLTVVIKDESPDAVADGILQLLPTLIKDPTEQRER.

G24–S29 is an ATP binding site. T28 contributes to the Mg(2+) binding site. Residues D46, R70, and G92 each contribute to the substrate site. R130 contributes to the ATP binding site. R149 lines the substrate pocket.

Belongs to the shikimate kinase family. In terms of assembly, monomer. The cofactor is Mg(2+).

The protein localises to the cytoplasm. The catalysed reaction is shikimate + ATP = 3-phosphoshikimate + ADP + H(+). The protein operates within metabolic intermediate biosynthesis; chorismate biosynthesis; chorismate from D-erythrose 4-phosphate and phosphoenolpyruvate: step 5/7. Functionally, catalyzes the specific phosphorylation of the 3-hydroxyl group of shikimic acid using ATP as a cosubstrate. The chain is Shikimate kinase from Synechococcus sp. (strain CC9902).